A 749-amino-acid polypeptide reads, in one-letter code: cGMP-dependent protein kinase egl-4 (749 aa).

Positions 30-96 form a coiled coil; sequence EAHELQKLIP…LEQKAQSAAS (67 aa). The interval 87–111 is disordered; it reads LEQKAQSAASPGQPPSPSPRTDQLG. Residues 234–237, 244–245, Arg349, 358–361, 368–369, and Tyr403 contribute to the 3',5'-cyclic GMP site; these read GELA, RT, and GERA. The 261-residue stretch at 438–698 folds into the Protein kinase domain; that stretch reads VKRLATLGVG…VNDIRKHRWF (261 aa). Residues 444-452 and Lys468 each bind ATP; that span reads LGVGGFGRV. The Nuclear localization signal signature appears at 461-473; sequence KSKTYALKALKKK. The Proton acceptor role is filled by Asp562. Positions 699 to 749 constitute an AGC-kinase C-terminal domain; it reads MGFDWEGLRTKTLKPPILPKVNNPADVTNFDNYPPDNDVPPDEFSGWDEGF. The disordered stretch occupies residues 723 to 749; sequence ADVTNFDNYPPDNDVPPDEFSGWDEGF.

This sequence belongs to the protein kinase superfamily. AGC Ser/Thr protein kinase family. cGMP subfamily. Mg(2+) serves as cofactor. Post-translationally, autophosphorylated.

It is found in the cytoplasm. The protein resides in the nucleus. The enzyme catalyses L-seryl-[protein] + ATP = O-phospho-L-seryl-[protein] + ADP + H(+). The catalysed reaction is L-threonyl-[protein] + ATP = O-phospho-L-threonyl-[protein] + ADP + H(+). Its activity is regulated as follows. Binding of cGMP results in enzyme activation. Promotes chemoreceptor gene expression in response to increased cGMP levels by antagonizing the gene repression functions of the class II HDAC hda-4 and the mef-2 transcription factor. Regulates gene expression via recruitment of a histone deacetylase complex containing hda-2, saeg-1 and saeg-2. Represses body size and lifespan through the dbl-1 and insulin pathways, respectively. May also signal through daf-3 and/or daf-5. Role in egg-laying, dauer formation and motility. Regulates behavioral responses to various chemosensory stimuli in sensory neurons. Required for the initiation of long term adaptation to prolonged odor exposure which results in a decrease in odor seeking behavior. May regulate this process by phosphorylating tax-2, a subunit of cyclic nucleotide-gated channel tax-2/tax-4. In ASH sensory neurons, negatively regulates avoidance behavior to some bitter tastants, such as quinine, probably by phosphorylating rgs-2 and rgs-3 which are 2 regulator of G-protein signaling proteins. In AWB sensory neurons, involved in avoidance behavior to some repellent odors. In ASE left (ASEL) sensory neuron, involved in the sensing of environmental alkalinity downstream of receptor-type guanylate cyclase gcy-14. In sensory neurons, involved in the signaling pathway downstream of insulin, TGF-beta and receptor-type guanylate cyclase responsible for inducing quiescence after food intake. Might play a role in aversive olfactory learning in AWC neurons when an odor is associated with food deprivation, depending on the ins-1/age-1 signal from the AIA to the AWC neurons. Probably by regulating neuronal transmission downstream of lin-3 and receptor lin-23 and phospholipase plc-3 in ALA neurons, involved in the decrease in locomotion during the quiescent state that precedes each larval molt. This Caenorhabditis briggsae protein is cGMP-dependent protein kinase egl-4.